Reading from the N-terminus, the 1322-residue chain is Myosin-1 (1322 aa).

One can recognise a Myosin motor domain in the interval 42-728 (AGVSDMTLLT…TLFALETMRD (687 aa)). 135–142 (GESGAGKT) provides a ligand contact to ATP. Position 369 is a phosphoserine (Ser369). The tract at residues 417–499 (VIGVLDIYGF…PGIFSALNDA (83 aa)) is actin-binding. IQ domains lie at 732–752 (HNMA…REES) and 753–778 (ARRI…YGHQ). Residues 786–980 (RRRFSLISMR…SGEPPTSVSR (195 aa)) form the TH1 domain. Disordered regions lie at residues 966 to 1090 (IVSV…MPSY) and 1137 to 1162 (VQQL…ATPA). 2 stretches are compositionally biased toward low complexity: residues 1000–1017 (SRPV…PTTT) and 1027–1056 (GGTA…ASGA). Polar residues-rich tracts occupy residues 1078–1087 (PATSAPSSGM) and 1137–1148 (VQQLGSSSTAQT). Residues 1184 to 1243 (RRLPRYRALYDFETQEAGELPLRTGDIVELEEKEENGWWLVKKGSTEGWSPADYLELIAE) enclose the SH3 domain. The interval 1246–1300 (AAKPRPPPPAKPASAKPAAAPARVSQSSVTSSWTPPDSHAAPVAVMPGMGDPGGF) is disordered. Residues 1257–1267 (PASAKPAAAPA) show a composition bias toward low complexity. Over residues 1269–1280 (VSQSSVTSSWTP) the composition is skewed to polar residues.

The protein belongs to the TRAFAC class myosin-kinesin ATPase superfamily. Myosin family. Phosphorylation of the TEDS site (Ser-369) is required for the polarization of the actin cytoskeleton. Phosphorylation probably activates the myosin-I ATPase activity.

It is found in the cytoplasm. The protein localises to the cytoskeleton. Its subcellular location is the actin patch. Its function is as follows. Type-I myosin implicated in the organization of the actin cytoskeleton. Required for proper actin cytoskeleton polarization. At the cell cortex, assembles in patch-like structures together with proteins from the actin-polymerizing machinery and promotes actin assembly. Functions as actin nucleation-promoting factor (NPF) for the Arp2/3 complex. The protein is Myosin-1 (MYO1) of Malassezia globosa (strain ATCC MYA-4612 / CBS 7966) (Dandruff-associated fungus).